A 506-amino-acid chain; its full sequence is 5'-3' exonuclease PLD4 (506 aa).

Residues 31–51 (LQVLGALAVLWLGSVALICLL) form a helical membrane-spanning segment. C94 and C250 form a disulfide bridge. Residues N150 and N171 are each glycosylated (N-linked (GlcNAc...) asparagine). In terms of domain architecture, PLD phosphodiesterase 1 spans 209 to 236 (TRGVLHSKFWVVDGRHIYMGSANMDWRS). The active-site Proton donor is H214. Residues K216 and D221 contribute to the active site. N-linked (GlcNAc...) asparagine glycans are attached at residues N249, N281, N403, N417, and N427. C379 and C502 are joined by a disulfide. Positions 423–449 (FSRVNHSKFMVTEKAAYIGTSNWSEDY) constitute a PLD phosphodiesterase 2 domain. The active-site Nucleophile is the H428. N444 is a glycosylation site (N-linked (GlcNAc...) asparagine).

The protein belongs to the phospholipase D family. As to quaternary structure, homodimer. Highly N-glycosylated. As to expression, expressed in plasmacytoid dendritic cells and monocytes (at protein level).

The protein resides in the endoplasmic reticulum membrane. It is found in the golgi apparatus. The protein localises to the trans-Golgi network membrane. It localises to the nucleus. Its subcellular location is the early endosome. The protein resides in the cytoplasmic vesicle. It is found in the phagosome. The protein localises to the lysosome. It catalyses the reaction Exonucleolytic cleavage in the 5'- to 3'-direction to yield nucleoside 3'-phosphates.. The catalysed reaction is a 5'-end 5'-dephospho-ribonucleotidyl-ribonucleotide-RNA + H2O = a ribonucleoside 3'-phosphate + a 5'-end dephospho-ribonucleoside-RNA + H(+). It carries out the reaction a ribonucleoside 3'-phosphate-2'-3'-cyclophospho-GMP + H2O = a ribonucleoside 3'-phosphate + 2',3'-cyclophospho-GMP + H(+). The enzyme catalyses a 5'-end 5'-dephospho-2'-deoxyribonucleotidyl-2'-deoxyribonucleotide in single-stranded DNA + H2O = a 5'-end dephospho-2'-deoxyribonucleoside in single-stranded DNA + a 2'-deoxyribonucleoside 3'-phosphate + H(+). It catalyses the reaction a 5'-end 5'-phospho-2'-deoxyribonucleotide in single-stranded DNA + H2O = a 5'-end 5'-dephospho-2'-deoxyribonucleotide in single-stranded DNA + phosphate. The catalysed reaction is a 3-lyso-sn-glycero-1-phospho-(3'-acyl-1'-sn-glycerol) + a 1-acyl-sn-glycerol = a 3-acyl-sn-glycero-1-phospho-(3'-acyl-1'-sn-glycerol) + glycerol. It carries out the reaction 3-lyso-sn-glycero-1-phospho-(3'-(9Z-octadecenoyl)-1'-sn-glycerol) + 1-(9Z-octadecenoyl)-sn-glycerol = 3-(9Z-octadecenoyl)-sn-glycero-1-phospho-(3'-(9Z-octadecenoyl)-1'-sn-glycerol) + glycerol. The exonuclease activity toward ssDNA substrate is Ca(2+) and Mg(2+)-independent, but it is inhibited by Fe(2+), Cu(2+) and to a lesser extent Zn(2+) ions. 5'-&gt;3' exonuclease that hydrolyzes the phosphodiester bond of single-stranded DNA (ssDNA) and RNA molecules to form nucleoside 3'-monophosphates and 5'-end 5'-hydroxy deoxyribonucleotide/ribonucleotide fragments. Partially redundant with PLD3, can cleave all four nucleotides displaying higher efficiency for ssDNA and RNA fragments initiated with uridine and guanosine residues and lower efficiency for cytidine-initiated substrates. As a result, it does not always degrade polynucleotides to the single nucleotide level, it can stall at specific sites sparing certain fragments from exonucleolytic degradation. Processes self and pathogenic ssDNA and RNA molecules that reach the endolysosomal compartment via phagocytosis or autophagy and may serve as 'danger' signals for recognition by innate immune receptors such as toll-like receptors (TLRs). Degrades mitochondrial CpG-rich ssDNA fragments to prevent TLR9 activation and autoinflammatory response, but it can cleave viral RNA to generate ligands for TLR7 activation and initiate antiviral immune responses. In plasmacytoid dendritic cells, it cooperates with endonuclease RNASET2 to release 2',3'-cyclic guanosine monophosphate (2',3'-cGMP), a potent stimulatory ligand for TLR7. Produces 2',3'-cGMPs and cytidine-rich RNA fragments that occupy TLR7 ligand-binding pockets and trigger a signaling-competent state. Can exert polynucleotide phosphatase activity toward 5'-phosphorylated ssDNA substrates although at a slow rate. Transphosphatidylase that catalyzes the exchange with R to S stereo-inversion of the glycerol moiety between (S,R)-lysophosphatidylglycerol (LPG) and monoacylglycerol (MAG) substrates to yield (S,S)-bis(monoacylglycero)phosphate (BMP). Can synthesize a variety of (S,S)-BMPs representing the main phospholipid constituent of lysosomal intralumenal vesicle (ILV) membranes that bind acid hydrolases for lipid degradation. Regulates the homeostasis and interorganellar communication of the endolysosomal system with an overall impact on cellular removal of dysfunctional organelles via autophagy as well as proper protein and lipid turnover. May play a role in myotube formation in response to ER stress. The sequence is that of 5'-3' exonuclease PLD4 from Homo sapiens (Human).